A 564-amino-acid chain; its full sequence is Phosphoinositide phospholipase C 3 (564 aa).

In terms of domain architecture, EF-hand spans 19 to 54; that stretch reads TRQPPVSIKRLFEAYSRNGKMSFDELLRFVSEVQGE. Residues 106–250 enclose the PI-PLC X-box domain; the sequence is HDMKAPLSHY…LKGKILISTK (145 aa). Active-site residues include His121 and His167. The PI-PLC Y-box domain occupies 296-412; it reads RDLIAIHAAN…GYVKKPRILL (117 aa). Residues 406 to 539 enclose the C2 domain; it reads KKPRILLDEH…KSGVRAVRLH (134 aa). The Ca(2+) site is built by Asp450, Asp456, Asp509, Asp511, and Asp517.

Requires Ca(2+) as cofactor. Expressed in leaves, roots and siliques, but not in flowers.

The protein resides in the cell membrane. The enzyme catalyses a 1,2-diacyl-sn-glycero-3-phospho-(1D-myo-inositol-4,5-bisphosphate) + H2O = 1D-myo-inositol 1,4,5-trisphosphate + a 1,2-diacyl-sn-glycerol + H(+). Functionally, the production of the second messenger molecules diacylglycerol (DAG) and inositol 1,4,5-trisphosphate (IP3) is mediated by activated phosphatidylinositol-specific phospholipase C enzymes. The sequence is that of Phosphoinositide phospholipase C 3 (PLC3) from Arabidopsis thaliana (Mouse-ear cress).